We begin with the raw amino-acid sequence, 510 residues long: Leucine-rich repeat-containing protein 14B (510 aa).

An LRR 1; degenerate repeat occupies 100-137; the sequence is SNRLRVADFTGIQDVQVQQCPCGRALGRWGRTKVLART. One copy of the LRR 2; degenerate repeat lies at 181–205; the sequence is QVCCPSLRADSLSPGQLLQVLGLAG. An LRR 4; degenerate repeat occupies 234–273; sequence FPQLTSLTLPTKAFDAPPTCAPDPEGEDLLLTSIAWELSQ. 5 LRR repeats span residues 274-298, 299-330, 331-349, 355-382, and 383-407; these read MNQL…LSPL, KTPL…AHLE, VLDL…TFFR, AQTL…GLSP, and CSQL…LFAA.

It belongs to the PRAME family. LRRC14 subfamily.

This chain is Leucine-rich repeat-containing protein 14B, found in Mus musculus (Mouse).